A 284-amino-acid chain; its full sequence is 4-diphosphocytidyl-2-C-methyl-D-erythritol kinase (284 aa).

The active site involves Lys10. 95–105 is a binding site for ATP; that stretch reads PVAAGLGGGSS. The active site involves Asp137.

It belongs to the GHMP kinase family. IspE subfamily.

It catalyses the reaction 4-CDP-2-C-methyl-D-erythritol + ATP = 4-CDP-2-C-methyl-D-erythritol 2-phosphate + ADP + H(+). It participates in isoprenoid biosynthesis; isopentenyl diphosphate biosynthesis via DXP pathway; isopentenyl diphosphate from 1-deoxy-D-xylulose 5-phosphate: step 3/6. Catalyzes the phosphorylation of the position 2 hydroxy group of 4-diphosphocytidyl-2C-methyl-D-erythritol. This chain is 4-diphosphocytidyl-2-C-methyl-D-erythritol kinase, found in Levilactobacillus brevis (strain ATCC 367 / BCRC 12310 / CIP 105137 / JCM 1170 / LMG 11437 / NCIMB 947 / NCTC 947) (Lactobacillus brevis).